The chain runs to 1027 residues: Presequence protease, mitochondrial (1027 aa).

The N-terminal 22 residues, Met-1 to Trp-22, are a transit peptide targeting the mitochondrion. His-98 contributes to the Zn(2+) binding site. Glu-101 acts as the Proton acceptor in catalysis. Residues His-102 and Glu-199 each contribute to the Zn(2+) site. Cys-113 and Cys-550 are oxidised to a cystine. A disordered region spans residues Arg-803–Thr-827. Residues Ser-814–Ser-825 show a composition bias toward low complexity.

The protein belongs to the peptidase M16 family. PreP subfamily. Monomer and homodimer; homodimerization is induced by binding of the substrate. Requires Zn(2+) as cofactor. Post-translationally, a disulfide bond locks the enzyme in the closed conformation preventing substrate entry into the catalytic chamber.

It localises to the mitochondrion matrix. Mainly exists in a closed and catalytically competent conformation but a closed-to-open switch allows substrate entry into the catalytic chamber. Substrate binding induces closure and dimerization. A disulfide bond may lock the enzyme in a closed conformation preventing substrate entry into the catalytic chamber, participating in redox regulation of the enzyme. Inhibited by metal-chelating agents. Inhibited by nickel and zinc excess, and slightly activated by manganese. In terms of biological role, metalloendopeptidase of the mitochondrial matrix that functions in peptide cleavage and degradation rather than in protein processing. Has an ATP-independent activity. Specifically cleaves peptides in the range of 5 to 65 residues. Shows a preference for cleavage after small polar residues and before basic residues, but without any positional preference. Degrades the transit peptides of mitochondrial proteins after their cleavage. Also degrades other unstructured peptides. This is Presequence protease, mitochondrial (pitrm1) from Xenopus laevis (African clawed frog).